Here is a 301-residue protein sequence, read N- to C-terminus: uncharacterized protein (301 aa).

Residues Ser-44 and Tyr-107 each act as charge relay system in the active site. The active-site Proton donor is the Tyr-133. The active-site Schiff-base intermediate with substrate is Lys-162.

This sequence belongs to the DapA family. As to quaternary structure, homotetramer.

The protein localises to the cytoplasm. This is an uncharacterized protein from Pyrobaculum aerophilum (strain ATCC 51768 / DSM 7523 / JCM 9630 / CIP 104966 / NBRC 100827 / IM2).